The primary structure comprises 264 residues: Teichoic acids export ATP-binding protein TagH (264 aa).

In terms of domain architecture, ABC transporter spans 5–243 (VNIKNVTKEY…YEAFLNDFKK (239 aa)). 57 to 64 (GINGSGKS) contacts ATP.

The protein belongs to the ABC transporter superfamily. Teichoic acids exporter (TC 3.A.1.104.1) family. In terms of assembly, the complex is composed of two ATP-binding proteins (TagH) and two transmembrane proteins (TagG).

Its subcellular location is the cell membrane. The enzyme catalyses ATP + H2O + teichoic acidSide 1 = ADP + phosphate + teichoic acidSide 2.. Part of the ABC transporter complex TagGH involved in teichoic acids export. Responsible for energy coupling to the transport system. This chain is Teichoic acids export ATP-binding protein TagH, found in Staphylococcus aureus (strain Mu50 / ATCC 700699).